The primary structure comprises 44 residues: Photosystem I reaction center subunit IX (44 aa).

Residues Tyr-7 to Ile-27 traverse the membrane as a helical segment.

This sequence belongs to the PsaJ family.

It is found in the plastid. The protein resides in the chloroplast thylakoid membrane. In terms of biological role, may help in the organization of the PsaE and PsaF subunits. In Populus alba (White poplar), this protein is Photosystem I reaction center subunit IX.